The following is a 548-amino-acid chain: Nodulation protein NolO (548 aa).

It belongs to the NodU/CmcH family.

In terms of biological role, involved in 6-O-carbamoylation of Nod-factors. This is Nodulation protein NolO (nolO) from Bradyrhizobium diazoefficiens (strain JCM 10833 / BCRC 13528 / IAM 13628 / NBRC 14792 / USDA 110).